A 137-amino-acid chain; its full sequence is ATP synthase epsilon chain (137 aa).

Belongs to the ATPase epsilon chain family. F-type ATPases have 2 components, CF(1) - the catalytic core - and CF(0) - the membrane proton channel. CF(1) has five subunits: alpha(3), beta(3), gamma(1), delta(1), epsilon(1). CF(0) has three main subunits: a, b and c.

Its subcellular location is the cellular thylakoid membrane. Its function is as follows. Produces ATP from ADP in the presence of a proton gradient across the membrane. The polypeptide is ATP synthase epsilon chain (atpC) (Synechococcus elongatus (strain ATCC 33912 / PCC 7942 / FACHB-805) (Anacystis nidulans R2)).